Here is a 556-residue protein sequence, read N- to C-terminus: Oxygen-dependent choline dehydrogenase (556 aa).

4–33 is a binding site for FAD; it reads DYIIIGAGSAGNVLATRLTEDPNTSVLLLE. The Proton acceptor role is filled by His-473.

It belongs to the GMC oxidoreductase family. The cofactor is FAD.

The catalysed reaction is choline + A = betaine aldehyde + AH2. It catalyses the reaction betaine aldehyde + NAD(+) + H2O = glycine betaine + NADH + 2 H(+). It functions in the pathway amine and polyamine biosynthesis; betaine biosynthesis via choline pathway; betaine aldehyde from choline (cytochrome c reductase route): step 1/1. Involved in the biosynthesis of the osmoprotectant glycine betaine. Catalyzes the oxidation of choline to betaine aldehyde and betaine aldehyde to glycine betaine at the same rate. In Escherichia coli (strain K12 / DH10B), this protein is Oxygen-dependent choline dehydrogenase.